Consider the following 444-residue polypeptide: Glutamate--tRNA ligase (444 aa).

The 'HIGH' region motif lies at 12–22; that stretch reads PSPTGFLHVGG. Positions 213 to 217 match the 'KMSKS' region motif; the sequence is KMSKR. ATP is bound at residue Lys-216.

Belongs to the class-I aminoacyl-tRNA synthetase family. Glutamate--tRNA ligase type 1 subfamily. As to quaternary structure, monomer.

Its subcellular location is the cytoplasm. The catalysed reaction is tRNA(Glu) + L-glutamate + ATP = L-glutamyl-tRNA(Glu) + AMP + diphosphate. In terms of biological role, catalyzes the attachment of glutamate to tRNA(Glu) in a two-step reaction: glutamate is first activated by ATP to form Glu-AMP and then transferred to the acceptor end of tRNA(Glu). This Methylacidiphilum infernorum (isolate V4) (Methylokorus infernorum (strain V4)) protein is Glutamate--tRNA ligase.